Reading from the N-terminus, the 119-residue chain is uncharacterized protein (119 aa).

Positions 63–104 form a coiled coil; sequence KKIKKELESNSEKRKAALQMIKEEHTAKVDRYKMIIEDLRQQ.

This is an uncharacterized protein from Bacillus subtilis (strain 168).